The sequence spans 309 residues: Zinc-finger homeodomain protein 5 (309 aa).

Over residues 1-16 (MDMRSHEMIERRREDN) the composition is skewed to basic and acidic residues. The disordered stretch occupies residues 1-21 (MDMRSHEMIERRREDNGNNNG). The segment at 76 to 125 (YRECLKNHAASVGGSVHDGCGEFMPSGEEGTIEALRCAACDCHRNFHRKE) adopts a ZF-HD dimerization-type; degenerate zinc-finger fold. The homeobox DNA-binding region spans 240 to 303 (KKRFRTKFTT…NNKNNAKKPP (64 aa)).

As to quaternary structure, homo- and heterodimer with other ZFHD proteins. Interacts with MIF1, MIF2 and MIF3; these interactions prevent nuclear localization and DNA-binding to inhibit transcription regulation activity. Binds to ZHD1, ZHD2, ZHD4, ZHD10 and ZHD11. Mostly expressed in flowers and inflorescence.

The protein localises to the nucleus. Putative transcription factor. Binds DNA at 5'-ATTA-3' consensus promoter regions. Regulates floral architecture and leaf development. Regulators in the abscisic acid (ABA) signal pathway that confers sensitivity to ABA in an ARF2-dependent manner. This chain is Zinc-finger homeodomain protein 5 (ZHD5), found in Arabidopsis thaliana (Mouse-ear cress).